A 638-amino-acid polypeptide reads, in one-letter code: Guanylate-binding protein 7 (638 aa).

Residues 1–310 (MASEIHMPGP…DAINSGATPC (310 aa)) form a GTPase domain (Globular) region. Residues 35–277 (TQPVVVVAIV…FCSYIFTHAK (243 aa)) form the GB1/RHD3-type G domain. GTP contacts are provided by residues 45 to 52 (GLYRTGKS), 67 to 69 (LGC), and 97 to 101 (DTEGL). Residues 311–638 (LENAMAVLAQ…LRNPGKKIIS (328 aa)) are interaction with the CYBA-CYBB complex. A C-terminal tail; required for its localization to cytoplasmic vesicle region spans residues 590–638 (PSVFSQILDVAGSIFIAALPGAAKLVDLGMKILSSLCNRLRNPGKKIIS).

Belongs to the TRAFAC class dynamin-like GTPase superfamily. GB1/RHD3 GTPase family. GB1 subfamily. In terms of assembly, monomer and dimer. Interacts with CYBA, CYBA-CYBB complex and ATG4B. Interacts (via GB1/RHD3-type G domain) with NCF2 and NCF2-NCF4 complex.

Its subcellular location is the cytoplasmic vesicle membrane. The catalysed reaction is GTP + H2O = GDP + phosphate + H(+). It carries out the reaction GDP + H2O = GMP + phosphate + H(+). Functionally, interferon (IFN)-inducible GTPase that plays important roles in innate immunity against a diverse range of bacterial, viral and protozoan pathogens. Hydrolyzes GTP to GMP in two consecutive cleavage reactions and predominantly uses GTP and not GDP or GMP as the substrate. Following infection, recruited to the pathogen-containing vacuoles or vacuole-escaped bacteria and acts as a positive regulator of inflammasome assembly by promoting the release of inflammasome ligands from bacteria. Acts by promoting lysis of pathogen-containing vacuoles, releasing pathogens into the cytosol. Following pathogen release in the cytosol, promotes recruitment of proteins that mediate bacterial cytolysis: this liberates ligands that are detected by inflammasomes, such as lipopolysaccharide (LPS) that activates the non-canonical CASP4/CASP11 inflammasome or double-stranded DNA (dsDNA) that activates the AIM2 inflammasome. Also promotes IFN-gamma-mediated host defense against bacterial infections by regulating oxidative responses and bacteriolytic peptide generation. May help to assemble NADPH oxidase on phagosomal membranes by acting as a bridging protein between NADPH oxidase cytosolic subunits NCF2-NCF4 and the membrane subunits CYBA-CYBB. Participates along with GBP1 in trafficking monoubiquinated protein cargo to autolysosomes for generating ubiquitin-derived antimicrobial peptides. Facilitates influenza A virus replication by inhibiting the activation of NF-kappaB and JAK-STAT signaling pathways and the expression of type I, type III interferons and pro-inflammatory cytokines. Confers protection to several pathogens, including the bacterial pathogens Listeria monocytogenes and Mycobacterium bovis BCG as well as the protozoan pathogen Toxoplasma gondii. Required for disruption of the parasitophorous vacuole formed following T.gondii infection and subsequent killing of the parasite. In Homo sapiens (Human), this protein is Guanylate-binding protein 7 (GBP7).